The chain runs to 351 residues: tRNA (guanine(26)-N(2))-dimethyltransferase (351 aa).

The Trm1 methyltransferase domain maps to 4-350 (VLRREGAVQF…AGYGEVKRAL (347 aa)). Residues Arg-39, Arg-65, Asp-83, Asp-109, and Ala-110 each coordinate S-adenosyl-L-methionine.

The protein belongs to the class I-like SAM-binding methyltransferase superfamily. Trm1 family.

The enzyme catalyses guanosine(26) in tRNA + 2 S-adenosyl-L-methionine = N(2)-dimethylguanosine(26) in tRNA + 2 S-adenosyl-L-homocysteine + 2 H(+). In terms of biological role, dimethylates a single guanine residue at position 26 of a number of tRNAs using S-adenosyl-L-methionine as donor of the methyl groups. This chain is tRNA (guanine(26)-N(2))-dimethyltransferase, found in Pyrobaculum neutrophilum (strain DSM 2338 / JCM 9278 / NBRC 100436 / V24Sta) (Thermoproteus neutrophilus).